The sequence spans 193 residues: Pyridoxal 5'-phosphate synthase subunit PdxT (193 aa).

Residue 48-50 (GES) participates in L-glutamine binding. Cys80 serves as the catalytic Nucleophile. Residues Arg107 and 136–137 (IR) contribute to the L-glutamine site. Active-site charge relay system residues include His172 and Glu174.

It belongs to the glutaminase PdxT/SNO family. In terms of assembly, in the presence of PdxS, forms a dodecamer of heterodimers. Only shows activity in the heterodimer.

It carries out the reaction aldehydo-D-ribose 5-phosphate + D-glyceraldehyde 3-phosphate + L-glutamine = pyridoxal 5'-phosphate + L-glutamate + phosphate + 3 H2O + H(+). The enzyme catalyses L-glutamine + H2O = L-glutamate + NH4(+). The protein operates within cofactor biosynthesis; pyridoxal 5'-phosphate biosynthesis. Functionally, catalyzes the hydrolysis of glutamine to glutamate and ammonia as part of the biosynthesis of pyridoxal 5'-phosphate. The resulting ammonia molecule is channeled to the active site of PdxS. The chain is Pyridoxal 5'-phosphate synthase subunit PdxT from Clostridium botulinum (strain Loch Maree / Type A3).